The following is a 239-amino-acid chain: 7-cyano-7-deazaguanine synthase (239 aa).

An ATP-binding site is contributed by L8–L18. Zn(2+)-binding residues include C188, C196, C199, and C202.

Belongs to the QueC family. Requires Zn(2+) as cofactor.

It catalyses the reaction 7-carboxy-7-deazaguanine + NH4(+) + ATP = 7-cyano-7-deazaguanine + ADP + phosphate + H2O + H(+). Its pathway is purine metabolism; 7-cyano-7-deazaguanine biosynthesis. Catalyzes the ATP-dependent conversion of 7-carboxy-7-deazaguanine (CDG) to 7-cyano-7-deazaguanine (preQ(0)). The chain is 7-cyano-7-deazaguanine synthase from Picrophilus torridus (strain ATCC 700027 / DSM 9790 / JCM 10055 / NBRC 100828 / KAW 2/3).